The primary structure comprises 167 residues: Protein YfbM (167 aa).

In terms of assembly, monomer.

The polypeptide is Protein YfbM (yfbM) (Escherichia coli (strain K12)).